The following is a 333-amino-acid chain: Beta-ketoacyl-[acyl-carrier-protein] synthase III (333 aa).

Residues Cys-112 and His-255 contribute to the active site. Residues 256 to 260 are ACP-binding; that stretch reads QANQR. The active site involves Asn-285.

Belongs to the thiolase-like superfamily. FabH family. As to quaternary structure, homodimer.

It localises to the cytoplasm. It carries out the reaction malonyl-[ACP] + acetyl-CoA + H(+) = 3-oxobutanoyl-[ACP] + CO2 + CoA. It participates in lipid metabolism; fatty acid biosynthesis. Functionally, catalyzes the condensation reaction of fatty acid synthesis by the addition to an acyl acceptor of two carbons from malonyl-ACP. Catalyzes the first condensation reaction which initiates fatty acid synthesis and may therefore play a role in governing the total rate of fatty acid production. Possesses both acetoacetyl-ACP synthase and acetyl transacylase activities. Its substrate specificity determines the biosynthesis of branched-chain and/or straight-chain of fatty acids. The chain is Beta-ketoacyl-[acyl-carrier-protein] synthase III from Synechococcus sp. (strain RCC307).